A 284-amino-acid polypeptide reads, in one-letter code: 4-diphosphocytidyl-2-C-methyl-D-erythritol kinase (284 aa).

Lysine 14 is an active-site residue. 98–108 contributes to the ATP binding site; it reads PMGGGIGGGSS. The active site involves aspartate 140.

The protein belongs to the GHMP kinase family. IspE subfamily.

The enzyme catalyses 4-CDP-2-C-methyl-D-erythritol + ATP = 4-CDP-2-C-methyl-D-erythritol 2-phosphate + ADP + H(+). Its pathway is isoprenoid biosynthesis; isopentenyl diphosphate biosynthesis via DXP pathway; isopentenyl diphosphate from 1-deoxy-D-xylulose 5-phosphate: step 3/6. Its function is as follows. Catalyzes the phosphorylation of the position 2 hydroxy group of 4-diphosphocytidyl-2C-methyl-D-erythritol. The chain is 4-diphosphocytidyl-2-C-methyl-D-erythritol kinase from Shewanella woodyi (strain ATCC 51908 / MS32).